Consider the following 655-residue polypeptide: MPIETEPNRTRKNFEPKRFGGSLFILFTLLLFLNLFVLRGPRFPITAYSDFITQVEAGQVERVEVRPDRIRYILKSDQYGFNEGTETAAVFDTVPVGIDLELPKFLREHDVQYFAPPPSSLSWLPTLLGWVVPPLIFFGIWSWLINRNQGAGPAALTVGQSKARIYSEGSTGVTFDDVAGVEEAKTELLEIVDFLAHADKYTRLGAKIPKGVLLVGPPGTGKTLLAKAIAGEAKVPFFSISGSEFIELFVGIGAARVRDLFEQAKQQAPCIVFIDELDALGKARGGPGGFTGGNDEREQTLNQLLSEMDGFDPNVGVILLAATNRPEVLDPALLRPGRFDRQIVVDRPDKMGREAILKVHVRGVKLAEDINLTKLAVRTPGFSGADLANLVNEAALLAARQSRDAVVMSDFNEAIERVVAGLEKKSRVLNDLEKKTVAYHEVGHAIVGSLMPGAGTVEKISVIPRGIGALGYTLQLPEEDRFLITASELRGRIATLLGGRSAEELIFGVVSTGASDDIQKATDLAERYVTLYGMSDELGPIAYEKAQQQFLEGVPNPRRTVGPQVVEAIDQAVKDVVDGAHHMALSILSINQDMLQLTASHLLEKEVLESQELHSLLSQPQFPPDMDEWLQTGKLPQGKELIQTTLNSHQLIGIN.

The Cytoplasmic segment spans residues 1-17; it reads MPIETEPNRTRKNFEPK. The helical transmembrane segment at 18–38 threads the bilayer; it reads RFGGSLFILFTLLLFLNLFVL. Residues 39–124 are Lumenal-facing; it reads RGPRFPITAY…APPPSSLSWL (86 aa). Residues 125–145 traverse the membrane as a helical segment; that stretch reads PTLLGWVVPPLIFFGIWSWLI. The Cytoplasmic portion of the chain corresponds to 146-655; that stretch reads NRNQGAGPAA…LNSHQLIGIN (510 aa). Residue 216–223 participates in ATP binding; sequence GPPGTGKT. H440 is a Zn(2+) binding site. Residue E441 is part of the active site. Zn(2+) contacts are provided by H444 and D517.

The protein in the central section; belongs to the AAA ATPase family. In the C-terminal section; belongs to the peptidase M41 family. Homohexamer. The cofactor is Zn(2+).

Its subcellular location is the cellular thylakoid membrane. Its function is as follows. Acts as a processive, ATP-dependent zinc metallopeptidase for both cytoplasmic and membrane proteins. Plays a role in the quality control of integral membrane proteins. This chain is ATP-dependent zinc metalloprotease FtsH, found in Acaryochloris marina (strain MBIC 11017).